Consider the following 326-residue polypeptide: MFISISAGIVTFLLTLVGIPAFIQFYRKAQITGQQMHEDVKQHQAKAGTPTMGGLVFLITSVLVAFFFALFSSQFSNNVGMILFILVLYGLVGFLDDFLKVFRKINEGLNPKQKLALQLLGGVIFYLFYERGGDILSVFGYPVHLGFFYIFFALFWLVGFSNAVNLTDGVDGLASISVVISLFAYGVIAYVQGQMDILLVILAMIGGLLGFFIFNHKPAKVFMGDVGSLALGGMLAAISMALHQEWTLLIIGIVYVFETTSVMMQVSYFKLTGGKRIFRMTPVHHHFELGGLSGKGNPWSEWKVDFFFWGVGLLASLLTLAILYLM.

A run of 9 helical transmembrane segments spans residues 3–23 (ISIS…PAFI), 51–71 (TMGG…FALF), 79–99 (VGMI…DDFL), 115–135 (LALQ…GGDI), 138–158 (VFGY…FWLV), 169–189 (GVDG…GVIA), 195–215 (MDIL…FIFN), 221–243 (VFMG…MALH), and 306–326 (FFFW…LYLM).

Belongs to the glycosyltransferase 4 family. MraY subfamily. Requires Mg(2+) as cofactor.

The protein resides in the cell membrane. The catalysed reaction is UDP-N-acetyl-alpha-D-muramoyl-L-alanyl-gamma-D-glutamyl-L-lysyl-D-alanyl-D-alanine + di-trans,octa-cis-undecaprenyl phosphate = Mur2Ac(oyl-L-Ala-gamma-D-Glu-L-Lys-D-Ala-D-Ala)-di-trans,octa-cis-undecaprenyl diphosphate + UMP. The protein operates within cell wall biogenesis; peptidoglycan biosynthesis. Catalyzes the initial step of the lipid cycle reactions in the biosynthesis of the cell wall peptidoglycan: transfers peptidoglycan precursor phospho-MurNAc-pentapeptide from UDP-MurNAc-pentapeptide onto the lipid carrier undecaprenyl phosphate, yielding undecaprenyl-pyrophosphoryl-MurNAc-pentapeptide, known as lipid I. The protein is Phospho-N-acetylmuramoyl-pentapeptide-transferase of Streptococcus pneumoniae serotype 2 (strain D39 / NCTC 7466).